Reading from the N-terminus, the 256-residue chain is MNFTVIIPARYASSRLPGKPLADIAGKPMIQHVWEKAQQSGATRVVVATDYEEVARAVRGFDGEVCMTSSQHNSGTERLAEVIEKLAIPDDEIIVNIQGDEPLVPPVIVSQVAQNLQKYQVNMATLAVKIEDVEELFNPNVVKVLTDKDGYVLYFSRAVIPWDRDQFVQLGKADLSQLQLHQHYFRHIGIYAYRAGFIKQYVQWQPTTLEQIERLEQLRVLWNGERIHVELAKQAPAVGVDTVEDLEKVRSILSHV.

It belongs to the KdsB family.

It is found in the cytoplasm. It carries out the reaction 3-deoxy-alpha-D-manno-oct-2-ulosonate + CTP = CMP-3-deoxy-beta-D-manno-octulosonate + diphosphate. Its pathway is nucleotide-sugar biosynthesis; CMP-3-deoxy-D-manno-octulosonate biosynthesis; CMP-3-deoxy-D-manno-octulosonate from 3-deoxy-D-manno-octulosonate and CTP: step 1/1. The protein operates within bacterial outer membrane biogenesis; lipopolysaccharide biosynthesis. Activates KDO (a required 8-carbon sugar) for incorporation into bacterial lipopolysaccharide in Gram-negative bacteria. The chain is 3-deoxy-manno-octulosonate cytidylyltransferase from Histophilus somni (strain 129Pt) (Haemophilus somnus).